A 536-amino-acid polypeptide reads, in one-letter code: Pre-mRNA-splicing factor SLU7-B (536 aa).

The disordered stretch occupies residues 1–42; the sequence is MATASVAFKSREDHRKKLELEEARKAGLAPAEVDEDGKEINP. Basic and acidic residues predominate over residues 9–25; that stretch reads KSREDHRKKLELEEARK. Residues 96-109 form a CCHC-type zinc finger; the sequence is CINCGAMTHSSKAC. 2 disordered regions span residues 176–201 and 488–507; these read LKKL…DLDD and KEDL…YNVN. Residues 187 to 200 are compositionally biased toward acidic residues; sequence NGDDATSDGEEDLD. The residue at position 193 (Ser-193) is a Phosphoserine. The Nuclear localization signal motif lies at 486 to 493; sequence LKKEDLSR. The segment covering 488–501 has biased composition (basic and acidic residues); sequence KEDLSRREEKDERK.

It belongs to the SLU7 family. Interacts with PHYB in photobodies under red light.

Its subcellular location is the nucleus. Participates in the second catalytic step of pre-mRNA splicing, when the free hydroxyl group of exon I attacks the 3'-splice site to generate spliced mRNA and the excised lariat intron. Splicing factor acting as a negative regulator of seedling photomorphogenesis by antagonizing PHYB signaling to promote light-induced hypocotyl elongation. Prevents the accumulation of functionally spliced RVE8a form, a circadian clock regulator mediating the transcriptional activation of clock genes containing evening elements (EE), but promotes PIF4 expression to fine-tune hypocotyl elongation in the light. Together with SMP1, involved in the timing of cell cycle arrest during leaf development, in a STRUWWELPETER (SWP) dependent manner; promotes cell proliferation in developing organs. The chain is Pre-mRNA-splicing factor SLU7-B from Arabidopsis thaliana (Mouse-ear cress).